Here is a 414-residue protein sequence, read N- to C-terminus: Schlafen-like protein 1 (414 aa).

The segment at 141–203 (LHHREQDDSG…ISQNRPSGVR (63 aa)) is disordered. Residues 154 to 185 (SHSPGPSPGPSPGPSPGFRRPPLPQLADPPPN) show a composition bias toward pro residues. 268 to 275 (GVEDSGLV) is a binding site for ATP. The stretch at 373 to 407 (RQKWTAELSKLEEKVDVLTLEKEQLQEQLRQRQTL) forms a coiled coil.

It belongs to the Schlafen family. Subgroup I subfamily.

The chain is Schlafen-like protein 1 (Slfnl1) from Rattus norvegicus (Rat).